A 126-amino-acid chain; its full sequence is S-adenosylmethionine decarboxylase proenzyme (126 aa).

Serine 63 acts as the Schiff-base intermediate with substrate; via pyruvic acid in catalysis. Residue serine 63 is modified to Pyruvic acid (Ser); by autocatalysis. The Proton acceptor; for processing activity role is filled by histidine 68. Cysteine 83 functions as the Proton donor; for catalytic activity in the catalytic mechanism.

Belongs to the prokaryotic AdoMetDC family. Type 1 subfamily. Heterotetramer of two alpha and two beta chains arranged as a dimer of alpha/beta heterodimers. Pyruvate is required as a cofactor. Is synthesized initially as an inactive proenzyme. Formation of the active enzyme involves a self-maturation process in which the active site pyruvoyl group is generated from an internal serine residue via an autocatalytic post-translational modification. Two non-identical subunits are generated from the proenzyme in this reaction, and the pyruvate is formed at the N-terminus of the alpha chain, which is derived from the carboxyl end of the proenzyme. The post-translation cleavage follows an unusual pathway, termed non-hydrolytic serinolysis, in which the side chain hydroxyl group of the serine supplies its oxygen atom to form the C-terminus of the beta chain, while the remainder of the serine residue undergoes an oxidative deamination to produce ammonia and the pyruvoyl group blocking the N-terminus of the alpha chain.

The enzyme catalyses S-adenosyl-L-methionine + H(+) = S-adenosyl 3-(methylsulfanyl)propylamine + CO2. Its pathway is amine and polyamine biosynthesis; S-adenosylmethioninamine biosynthesis; S-adenosylmethioninamine from S-adenosyl-L-methionine: step 1/1. Its function is as follows. Catalyzes the decarboxylation of S-adenosylmethionine to S-adenosylmethioninamine (dcAdoMet), the propylamine donor required for the synthesis of the polyamines spermine and spermidine from the diamine putrescine. This Syntrophomonas wolfei subsp. wolfei (strain DSM 2245B / Goettingen) protein is S-adenosylmethionine decarboxylase proenzyme.